A 134-amino-acid chain; its full sequence is Beta-synuclein (134 aa).

Tandem repeats lie at residues 20–30 and 31–41. The 4 X 11 AA tandem repeats of [EGS]-K-T-K-[EQ]-[GQ]-V-X(4) stretch occupies residues 20–67; it reads EKTKQGVTEAAEKTKEGVLYVGSKTKEGVVQGVASVAEKTKEQASHLG. The stretch at 42–56 is one 3; approximate repeat; sequence SKTKEGVVQGVASVA. Residues 57–67 form repeat 4; sequence EKTKEQASHLG. The interval 97–134 is disordered; that stretch reads EVAQEAAEEPLIEPLMEPEGESYEEQPQEEYQEYEPEA. Residues 98-134 are compositionally biased toward acidic residues; the sequence is VAQEAAEEPLIEPLMEPEGESYEEQPQEEYQEYEPEA. Phosphoserine; by BARK1, CK2 and GRK5 is present on Ser-118.

The protein belongs to the synuclein family. In terms of processing, phosphorylated. Phosphorylation by G-protein coupled receptor kinases (GRK) is more efficient than phosphorylation by CK1, CK2 and CaM-kinase II. In terms of tissue distribution, specifically present in synapses around neurons but not in glial cells.

Its subcellular location is the cytoplasm. Functionally, may be involved in neuronal plasticity. The polypeptide is Beta-synuclein (SNCB) (Bos taurus (Bovine)).